We begin with the raw amino-acid sequence, 238 residues long: Uridylate kinase (238 aa).

Residue 13 to 16 (KLSG) participates in ATP binding. Gly-53 is a binding site for UMP. The ATP site is built by Gly-54 and Arg-58. UMP-binding positions include Asp-73 and 134–141 (AGLPYFST). Residues Asn-162, Tyr-168, and Asp-171 each coordinate ATP.

The protein belongs to the UMP kinase family. Homohexamer.

It localises to the cytoplasm. It carries out the reaction UMP + ATP = UDP + ADP. It participates in pyrimidine metabolism; CTP biosynthesis via de novo pathway; UDP from UMP (UMPK route): step 1/1. With respect to regulation, inhibited by UTP. Catalyzes the reversible phosphorylation of UMP to UDP. This chain is Uridylate kinase, found in Clavibacter michiganensis subsp. michiganensis (strain NCPPB 382).